The following is a 220-amino-acid chain: Riboflavin kinase (220 aa).

An H-T-H motif-like region spans residues 1–92 (METDDQYYRA…LSRILAIKNN (92 aa)). Positions 93 to 220 (VVITGTVTSG…GDRVSVEVYT (128 aa)) are riboflavin kinase. Position 102 to 107 (102 to 107 (GMGEGR)) interacts with CDP. Positions 131 and 133 each coordinate Mg(2+). Residues T188 and E195 each contribute to the FMN site. 200–203 (KYLR) is a CDP binding site.

This sequence belongs to the archaeal riboflavin kinase family. Requires Mg(2+) as cofactor.

It carries out the reaction riboflavin + CTP = CDP + FMN + H(+). It functions in the pathway cofactor biosynthesis; FMN biosynthesis; FMN from riboflavin (CTP route): step 1/1. In terms of biological role, catalyzes the CTP-dependent phosphorylation of riboflavin (vitamin B2) to form flavin mononucleotide (FMN). The polypeptide is Riboflavin kinase (ribK) (Thermoplasma acidophilum (strain ATCC 25905 / DSM 1728 / JCM 9062 / NBRC 15155 / AMRC-C165)).